The following is a 310-amino-acid chain: Olfactory receptor 5P55 (310 aa).

Residues 1–25 (METQNHTTVTEFILLGLTESSTLRV) are Extracellular-facing. N-linked (GlcNAc...) asparagine glycosylation is present at Asn-5. Residues 26–46 (ILFMVFLGIYTVTLVGNFSII) form a helical membrane-spanning segment. Residues 47–54 (SLIRSCPQ) are Cytoplasmic-facing. A helical transmembrane segment spans residues 55–75 (LHTPMYLFLSHLAFVDIGFST). Residues 76 to 99 (SITPTMFKGFLGNRLVLSVAACIA) are Extracellular-facing. A disulfide bond links Cys-97 and Cys-189. Residues 100-120 (QFCITVTFGTVECFLLAVMAY) traverse the membrane as a helical segment. Over 121–133 (DRYVAICSPLLYS) the chain is Cytoplasmic. A helical membrane pass occupies residues 134 to 154 (THMSPRICFLLVGASYVGGCV). Residues 155-196 (NSGAFTSCLSILSFCGPNQIDHFFCDFPAVLKLSCSDVSIIG) lie on the Extracellular side of the membrane. Residues 197–217 (IIPSISAGSIIVITVFVIAVS) traverse the membrane as a helical segment. At 218–237 (YAYILITILKMRSTEGRQKA) the chain is on the cytoplasmic side. A helical membrane pass occupies residues 238–258 (FSTCTSHLTAVTLYYGTITFI). The Extracellular segment spans residues 259–271 (YVMPKSNYSTAQN). Asn-265 carries N-linked (GlcNAc...) asparagine glycosylation. Residues 272–292 (KILSVFYTVVIPMLNPLIYSL) traverse the membrane as a helical segment. Residues 293–310 (RNRDVKEALRKAIIRIFP) are Cytoplasmic-facing.

The protein belongs to the G-protein coupled receptor 1 family.

The protein localises to the cell membrane. Functionally, potential odorant receptor. This chain is Olfactory receptor 5P55, found in Mus musculus (Mouse).